The following is a 222-amino-acid chain: MERIDGVAVGLCAHSPYLRPFTLHYRQDGVQKSWDFMKTHDSVTILMFNSSRRSLVLVKQFRPAVYAGEVERHFPGSLTAVNQDQPQELQQALPGSAGVMVELCAGIVDQPGLSLEEAACKEAWEECGYRLVPTDLRRVATYMSGVGLTSSRQTMFYAEVTDAQRGGPGGGLAEEGELIEVIHLNLDDAQAFADNPDIPKTLGVIYAISWFFSQVVPHLSLQ.

The Nudix hydrolase domain maps to 38–206 (KTHDSVTILM…DIPKTLGVIY (169 aa)). The Nudix box signature appears at 111–129 (PGLSLEEAACKEAWEECGY).

This sequence belongs to the Nudix hydrolase family. As to quaternary structure, homodimer. Mg(2+) is required as a cofactor.

The protein localises to the cytoplasm. It carries out the reaction UDP-sugar + H2O = UMP + alpha-D-aldose 1-phosphate.. Functionally, hydrolyzes UDP-glucose to glucose 1-phosphate and UMP and ADP-ribose to ribose 5-phosphate and AMP. The physiological substrate is probably UDP-glucose. Poor activity on other substrates such as ADP-glucose, CDP-glucose, GDP-glucose and GDP-mannose. The protein is Uridine diphosphate glucose pyrophosphatase NUDT14 (Nudt14) of Mus musculus (Mouse).